The chain runs to 74 residues: Mu-conotoxin-like T3.1 (74 aa).

Residues 1 to 19 (MSKLGVLLTICLLLFPLTA) form the signal peptide. A propeptide spanning residues 20 to 74 (LPMDGDEPADRPAERMQDNISSEQHPLFEERHGCCKGPEGCSSRECRPQHCCGRR) is cleaved from the precursor. Cystine bridges form between cysteine 53-cysteine 65, cysteine 54-cysteine 70, and cysteine 60-cysteine 71. Residue proline 57 is modified to 4-hydroxyproline. 2 positions are modified to 4-carboxyglutamate: glutamate 58 and glutamate 64. Proline 67 is modified (4-hydroxyproline). Cysteine 71 carries the post-translational modification Cysteine amide.

Belongs to the conotoxin M superfamily. Expressed by the venom duct.

It localises to the secreted. Mu-conotoxins block voltage-gated sodium channels (Nav). In vitro, this synthetic peptide displays a low blocking effect in mouse extensor digitorum longus muscles (IC(50)=616 nM). In Conus tulipa (Fish-hunting cone snail), this protein is Mu-conotoxin-like T3.1.